The primary structure comprises 166 residues: Putative 4-hydroxy-4-methyl-2-oxoglutarate aldolase 1 (166 aa).

Ala-2 carries the N-acetylalanine modification. Substrate is bound by residues 81 to 84 (GGNP) and Arg-103. An a divalent metal cation-binding site is contributed by Asp-104.

Belongs to the class II aldolase/RraA-like family. Homotrimer. A divalent metal cation is required as a cofactor.

It catalyses the reaction 4-hydroxy-4-methyl-2-oxoglutarate = 2 pyruvate. The catalysed reaction is oxaloacetate + H(+) = pyruvate + CO2. Its function is as follows. Catalyzes the aldol cleavage of 4-hydroxy-4-methyl-2-oxoglutarate (HMG) into 2 molecules of pyruvate. Also contains a secondary oxaloacetate (OAA) decarboxylase activity due to the common pyruvate enolate transition state formed following C-C bond cleavage in the retro-aldol and decarboxylation reactions. The chain is Putative 4-hydroxy-4-methyl-2-oxoglutarate aldolase 1 from Arabidopsis thaliana (Mouse-ear cress).